The chain runs to 255 residues: Diphthine synthase (255 aa).

Residues Leu-9, Asp-85, Val-88, 113–114 (SI), Leu-164, Ala-207, and His-232 contribute to the S-adenosyl-L-methionine site.

Belongs to the diphthine synthase family. As to quaternary structure, homodimer.

The enzyme catalyses 2-[(3S)-amino-3-carboxypropyl]-L-histidyl-[translation elongation factor 2] + 3 S-adenosyl-L-methionine = diphthine-[translation elongation factor 2] + 3 S-adenosyl-L-homocysteine + 3 H(+). It functions in the pathway protein modification; peptidyl-diphthamide biosynthesis. Functionally, S-adenosyl-L-methionine-dependent methyltransferase that catalyzes the trimethylation of the amino group of the modified target histidine residue in translation elongation factor 2 (EF-2), to form an intermediate called diphthine. The three successive methylation reactions represent the second step of diphthamide biosynthesis. This Methanococcus maripaludis (strain C6 / ATCC BAA-1332) protein is Diphthine synthase.